The sequence spans 225 residues: Small ribosomal subunit protein uS3 (225 aa).

Residues 18 to 87 (VDEYLAKQFY…NPQITVTSVE (70 aa)) enclose the KH type-2 domain.

It belongs to the universal ribosomal protein uS3 family. As to quaternary structure, part of the 30S ribosomal subunit.

Binds the lower part of the 30S subunit head. The sequence is that of Small ribosomal subunit protein uS3 from Sulfurisphaera tokodaii (strain DSM 16993 / JCM 10545 / NBRC 100140 / 7) (Sulfolobus tokodaii).